A 285-amino-acid polypeptide reads, in one-letter code: Probable endonuclease 4 (285 aa).

Zn(2+) is bound by residues His-69, His-109, Glu-145, Asp-179, His-182, His-216, Asp-229, His-231, and Glu-261.

This sequence belongs to the AP endonuclease 2 family. It depends on Zn(2+) as a cofactor.

The catalysed reaction is Endonucleolytic cleavage to 5'-phosphooligonucleotide end-products.. Endonuclease IV plays a role in DNA repair. It cleaves phosphodiester bonds at apurinic or apyrimidinic (AP) sites, generating a 3'-hydroxyl group and a 5'-terminal sugar phosphate. In Escherichia coli O127:H6 (strain E2348/69 / EPEC), this protein is Probable endonuclease 4.